Consider the following 206-residue polypeptide: Protein sym1 (206 aa).

2 helical membrane-spanning segments follow: residues 107-127 and 169-189; these read VLLD…SWMT and LQYQ…FLSL.

The protein belongs to the peroxisomal membrane protein PXMP2/4 family.

The protein resides in the mitochondrion inner membrane. The polypeptide is Protein sym1 (sym1) (Schizosaccharomyces pombe (strain 972 / ATCC 24843) (Fission yeast)).